A 367-amino-acid polypeptide reads, in one-letter code: Anthranilate phosphoribosyltransferase (367 aa).

The segment covering 1–17 (MVLSSEASSAADHSAAA) has biased composition (low complexity). The interval 1 to 22 (MVLSSEASSAADHSAAAPIPTS) is disordered. 5-phospho-alpha-D-ribose 1-diphosphate-binding positions include glycine 104, 107-108 (GD), threonine 112, 114-117 (NLST), 132-140 (KHGNRAASS), and glycine 144. Residue glycine 104 coordinates anthranilate. Serine 116 contributes to the Mg(2+) binding site. Asparagine 135 is an anthranilate binding site. Residue arginine 190 participates in anthranilate binding. Positions 248 and 249 each coordinate Mg(2+).

The protein belongs to the anthranilate phosphoribosyltransferase family. Homodimer. Mg(2+) is required as a cofactor.

It catalyses the reaction N-(5-phospho-beta-D-ribosyl)anthranilate + diphosphate = 5-phospho-alpha-D-ribose 1-diphosphate + anthranilate. It participates in amino-acid biosynthesis; L-tryptophan biosynthesis; L-tryptophan from chorismate: step 2/5. In terms of biological role, catalyzes the transfer of the phosphoribosyl group of 5-phosphorylribose-1-pyrophosphate (PRPP) to anthranilate to yield N-(5'-phosphoribosyl)-anthranilate (PRA). The sequence is that of Anthranilate phosphoribosyltransferase from Mycobacterium marinum (strain ATCC BAA-535 / M).